Reading from the N-terminus, the 178-residue chain is ATP-dependent protease subunit HslV (178 aa).

Threonine 5 is a catalytic residue. Residues serine 161, cysteine 164, and threonine 167 each contribute to the Na(+) site.

It belongs to the peptidase T1B family. HslV subfamily. As to quaternary structure, a double ring-shaped homohexamer of HslV is capped on each side by a ring-shaped HslU homohexamer. The assembly of the HslU/HslV complex is dependent on binding of ATP.

The protein resides in the cytoplasm. The enzyme catalyses ATP-dependent cleavage of peptide bonds with broad specificity.. Allosterically activated by HslU binding. In terms of biological role, protease subunit of a proteasome-like degradation complex believed to be a general protein degrading machinery. The polypeptide is ATP-dependent protease subunit HslV (Syntrophomonas wolfei subsp. wolfei (strain DSM 2245B / Goettingen)).